We begin with the raw amino-acid sequence, 345 residues long: Transmembrane protein 144 homolog (345 aa).

10 helical membrane passes run 3 to 23, 32 to 52, 61 to 81, 84 to 104, 120 to 140, 193 to 213, 233 to 253, 265 to 285, 293 to 313, and 324 to 344; these read IAVG…MFVP, GIFV…VVYS, PLAM…VPIM, IGIG…GWAA, PFLN…FSQI, LAII…VPVI, VFSH…GYVI, LVGP…SWFV, AVSF…WSVF, and LRLL…VGVS.

The protein belongs to the TMEM144 family.

Its subcellular location is the membrane. The polypeptide is Transmembrane protein 144 homolog (Caenorhabditis elegans).